Reading from the N-terminus, the 252-residue chain is 2-succinyl-6-hydroxy-2,4-cyclohexadiene-1-carboxylate synthase (252 aa).

The protein belongs to the AB hydrolase superfamily. MenH family. In terms of assembly, monomer.

It carries out the reaction 5-enolpyruvoyl-6-hydroxy-2-succinyl-cyclohex-3-ene-1-carboxylate = (1R,6R)-6-hydroxy-2-succinyl-cyclohexa-2,4-diene-1-carboxylate + pyruvate. Its pathway is quinol/quinone metabolism; 1,4-dihydroxy-2-naphthoate biosynthesis; 1,4-dihydroxy-2-naphthoate from chorismate: step 3/7. It participates in quinol/quinone metabolism; menaquinone biosynthesis. Functionally, catalyzes a proton abstraction reaction that results in 2,5-elimination of pyruvate from 2-succinyl-5-enolpyruvyl-6-hydroxy-3-cyclohexene-1-carboxylate (SEPHCHC) and the formation of 2-succinyl-6-hydroxy-2,4-cyclohexadiene-1-carboxylate (SHCHC). This chain is 2-succinyl-6-hydroxy-2,4-cyclohexadiene-1-carboxylate synthase, found in Salmonella arizonae (strain ATCC BAA-731 / CDC346-86 / RSK2980).